Consider the following 91-residue polypeptide: Small ribosomal subunit protein uS15 (91 aa).

The protein belongs to the universal ribosomal protein uS15 family. In terms of assembly, part of the 30S ribosomal subunit. Forms a bridge to the 50S subunit in the 70S ribosome, contacting the 23S rRNA.

Functionally, one of the primary rRNA binding proteins, it binds directly to 16S rRNA where it helps nucleate assembly of the platform of the 30S subunit by binding and bridging several RNA helices of the 16S rRNA. In terms of biological role, forms an intersubunit bridge (bridge B4) with the 23S rRNA of the 50S subunit in the ribosome. The sequence is that of Small ribosomal subunit protein uS15 from Hydrogenobaculum sp. (strain Y04AAS1).